Reading from the N-terminus, the 391-residue chain is Erythronate-4-phosphate dehydrogenase (391 aa).

The substrate site is built by serine 45 and threonine 67. NAD(+)-binding residues include aspartate 147 and threonine 176. The active site involves arginine 209. Aspartate 238 provides a ligand contact to NAD(+). The active site involves glutamate 243. Histidine 260 functions as the Proton donor in the catalytic mechanism. Glycine 263 is a binding site for NAD(+). Tyrosine 264 contacts substrate.

This sequence belongs to the D-isomer specific 2-hydroxyacid dehydrogenase family. PdxB subfamily. As to quaternary structure, homodimer.

The protein resides in the cytoplasm. It carries out the reaction 4-phospho-D-erythronate + NAD(+) = (R)-3-hydroxy-2-oxo-4-phosphooxybutanoate + NADH + H(+). It participates in cofactor biosynthesis; pyridoxine 5'-phosphate biosynthesis; pyridoxine 5'-phosphate from D-erythrose 4-phosphate: step 2/5. Its function is as follows. Catalyzes the oxidation of erythronate-4-phosphate to 3-hydroxy-2-oxo-4-phosphonooxybutanoate. The sequence is that of Erythronate-4-phosphate dehydrogenase from Photobacterium profundum (strain SS9).